We begin with the raw amino-acid sequence, 325 residues long: Deoxyhypusine hydroxylase (325 aa).

Ser-2 is modified (N-acetylserine). 2 HEAT-like PBS-type repeats span residues 77-103 and 110-136; these read LKHE…VMLD and VRHE…AAKE. Residues His-79, Glu-80, His-112, and Glu-113 each coordinate Fe cation. Ser-126 is subject to Phosphoserine. Thr-187 carries the phosphothreonine modification. HEAT-like PBS-type repeat units follow at residues 202-231, 235-261, and 268-294; these read LFQR…FSAE, FKHE…VLGR, and VRHE…YLND. His-237, Glu-238, His-270, and Glu-271 together coordinate Fe cation. At Ser-281 the chain carries Phosphoserine.

The protein belongs to the deoxyhypusine hydroxylase family. Fe(2+) is required as a cofactor.

The protein resides in the cytoplasm. The protein localises to the nucleus. It catalyses the reaction [eIF5A protein]-deoxyhypusine + AH2 + O2 = [eIF5A protein]-hypusine + A + H2O. It functions in the pathway protein modification; eIF5A hypusination. Catalyzes the hydroxylation of the N(6)-(4-aminobutyl)-L-lysine intermediate to form hypusine, an essential post-translational modification only found in mature eIF-5A factor. The polypeptide is Deoxyhypusine hydroxylase (Saccharomyces cerevisiae (strain ATCC 204508 / S288c) (Baker's yeast)).